Here is a 154-residue protein sequence, read N- to C-terminus: Small ribosomal subunit protein uS11c (154 aa).

Belongs to the universal ribosomal protein uS11 family. Part of the 30S ribosomal subunit.

It localises to the plastid. In Helicosporidium sp. subsp. Simulium jonesii (Green alga), this protein is Small ribosomal subunit protein uS11c.